The following is a 465-amino-acid chain: Intraflagellar transport protein 54 (465 aa).

Disordered regions lie at residues 119–301 (VRSN…GFTM) and 347–366 (LHGD…DKKP). Residues 144–207 (LEALAREKAE…KQKQQQQQQQ (64 aa)) are a coiled coil. Over residues 146–198 (ALAREKAEKERQRREQEQQERERKERERQEKEREEREKHELESRERAEAEQWK) the composition is skewed to basic and acidic residues. Residues 199–220 (QKQQQQQQQQQSAISPQKSPPK) show a composition bias toward low complexity. Positions 222–242 (RFADDDKTRVEEHQPVIERPH) are enriched in basic and acidic residues.

It belongs to the TRAF3IP1 family.

The protein resides in the cell projection. Its subcellular location is the cilium. It localises to the flagellum. It is found in the cytoplasm. The protein localises to the cytoskeleton. The protein resides in the flagellum axoneme. Its subcellular location is the flagellum basal body. Functionally, component of the intraflagellar transport complex B (IFT-B) involved in flagellar assembly. The polypeptide is Intraflagellar transport protein 54 (Giardia intestinalis (strain ATCC 50803 / WB clone C6) (Giardia lamblia)).